The chain runs to 275 residues: ATP synthase subunit a (275 aa).

Helical transmembrane passes span 46-66, 104-124, 135-155, 166-186, 204-224, 231-251, and 252-272; these read RLML…VIAM, FLPV…ASII, IGMP…VGIK, SIVV…IEFI, MLAG…FFFV, IFGV…LLVI, and FLQA…ALHA.

It belongs to the ATPase A chain family. As to quaternary structure, F-type ATPases have 2 components, CF(1) - the catalytic core - and CF(0) - the membrane proton channel. CF(1) has five subunits: alpha(3), beta(3), gamma(1), delta(1), epsilon(1). CF(0) has three main subunits: a(1), b(2) and c(9-12). The alpha and beta chains form an alternating ring which encloses part of the gamma chain. CF(1) is attached to CF(0) by a central stalk formed by the gamma and epsilon chains, while a peripheral stalk is formed by the delta and b chains.

Its subcellular location is the cell membrane. Its function is as follows. Key component of the proton channel; it plays a direct role in the translocation of protons across the membrane. This is ATP synthase subunit a from Rhodococcus erythropolis (strain PR4 / NBRC 100887).